Here is a 100-residue protein sequence, read N- to C-terminus: uncharacterized protein (100 aa).

This is an uncharacterized protein from Clostridium tetanomorphum.